A 279-amino-acid chain; its full sequence is Malonyl-[acyl-carrier protein] O-methyltransferase (279 aa).

The protein belongs to the methyltransferase superfamily.

The catalysed reaction is malonyl-[ACP] + S-adenosyl-L-methionine = malonyl-[ACP] methyl ester + S-adenosyl-L-homocysteine. Its pathway is cofactor biosynthesis; biotin biosynthesis. Converts the free carboxyl group of a malonyl-thioester to its methyl ester by transfer of a methyl group from S-adenosyl-L-methionine (SAM). It allows to synthesize pimeloyl-ACP via the fatty acid synthetic pathway. The sequence is that of Malonyl-[acyl-carrier protein] O-methyltransferase from Hahella chejuensis (strain KCTC 2396).